Reading from the N-terminus, the 882-residue chain is Translation initiation factor IF-2 (882 aa).

Disordered regions lie at residues 95-176 (PSVT…ASSL) and 229-289 (EHAR…SALQ). Residues 116–133 (TKNTFSQESLNKTSPQKS) are compositionally biased toward polar residues. 2 stretches are compositionally biased toward basic and acidic residues: residues 137-172 (KAIE…REAE) and 229-246 (EHAR…EGDR). Basic residues predominate over residues 247–262 (RSRHRGTKTTKQKKTN). Residues 263-276 (KLSESKTDREEARA) show a composition bias toward basic and acidic residues. One can recognise a tr-type G domain in the interval 382–551 (HRAPVVTIMG…LLQAEVLELK (170 aa)). Residues 391–398 (GHVDHGKT) form a G1 region. 391 to 398 (GHVDHGKT) lines the GTP pocket. Residues 416 to 420 (GITQH) form a G2 region. The tract at residues 437 to 440 (DTPG) is G3. GTP-binding positions include 437–441 (DTPGH) and 491–494 (NKID). Residues 491–494 (NKID) form a G4 region. Residues 527 to 529 (SAK) form a G5 region.

It belongs to the TRAFAC class translation factor GTPase superfamily. Classic translation factor GTPase family. IF-2 subfamily.

Its subcellular location is the cytoplasm. In terms of biological role, one of the essential components for the initiation of protein synthesis. Protects formylmethionyl-tRNA from spontaneous hydrolysis and promotes its binding to the 30S ribosomal subunits. Also involved in the hydrolysis of GTP during the formation of the 70S ribosomal complex. In Hamiltonella defensa subsp. Acyrthosiphon pisum (strain 5AT), this protein is Translation initiation factor IF-2.